Consider the following 209-residue polypeptide: Phosphoheptose isomerase (209 aa).

In terms of domain architecture, SIS spans 50–209 (IADTFREGGK…ELVEKMMGYD (160 aa)). 65–67 (NGG) contributes to the substrate binding site. Residues His74 and Glu78 each contribute to the Zn(2+) site. Substrate is bound by residues Glu78, 109–110 (ND), 135–137 (STS), Ser140, and Gln188. Zn(2+) is bound by residues Gln188 and His196.

Belongs to the SIS family. GmhA subfamily. It depends on Zn(2+) as a cofactor.

It is found in the cytoplasm. The catalysed reaction is 2 D-sedoheptulose 7-phosphate = D-glycero-alpha-D-manno-heptose 7-phosphate + D-glycero-beta-D-manno-heptose 7-phosphate. It functions in the pathway carbohydrate biosynthesis; D-glycero-D-manno-heptose 7-phosphate biosynthesis; D-glycero-alpha-D-manno-heptose 7-phosphate and D-glycero-beta-D-manno-heptose 7-phosphate from sedoheptulose 7-phosphate: step 1/1. Its function is as follows. Catalyzes the isomerization of sedoheptulose 7-phosphate in D-glycero-D-manno-heptose 7-phosphate. This chain is Phosphoheptose isomerase, found in Chlorobaculum tepidum (strain ATCC 49652 / DSM 12025 / NBRC 103806 / TLS) (Chlorobium tepidum).